Consider the following 267-residue polypeptide: Small ribosomal subunit protein uS2 (267 aa).

Residues 226–267 (AAAPNSASVREEEFSAESADEGKGRRAPAKKGEKKADAPAAE) are disordered. Residues 245–267 (DEGKGRRAPAKKGEKKADAPAAE) are compositionally biased toward basic and acidic residues.

The protein belongs to the universal ribosomal protein uS2 family.

This is Small ribosomal subunit protein uS2 from Xanthomonas oryzae pv. oryzae (strain MAFF 311018).